The chain runs to 473 residues: Aspartyl/glutamyl-tRNA(Asn/Gln) amidotransferase subunit B (473 aa).

The protein belongs to the GatB/GatE family. GatB subfamily. In terms of assembly, heterotrimer of A, B and C subunits.

The catalysed reaction is L-glutamyl-tRNA(Gln) + L-glutamine + ATP + H2O = L-glutaminyl-tRNA(Gln) + L-glutamate + ADP + phosphate + H(+). It carries out the reaction L-aspartyl-tRNA(Asn) + L-glutamine + ATP + H2O = L-asparaginyl-tRNA(Asn) + L-glutamate + ADP + phosphate + 2 H(+). In terms of biological role, allows the formation of correctly charged Asn-tRNA(Asn) or Gln-tRNA(Gln) through the transamidation of misacylated Asp-tRNA(Asn) or Glu-tRNA(Gln) in organisms which lack either or both of asparaginyl-tRNA or glutaminyl-tRNA synthetases. The reaction takes place in the presence of glutamine and ATP through an activated phospho-Asp-tRNA(Asn) or phospho-Glu-tRNA(Gln). The polypeptide is Aspartyl/glutamyl-tRNA(Asn/Gln) amidotransferase subunit B (Campylobacter hominis (strain ATCC BAA-381 / DSM 21671 / CCUG 45161 / LMG 19568 / NCTC 13146 / CH001A)).